Here is a 662-residue protein sequence, read N- to C-terminus: Aprataxin-like protein (662 aa).

Residues 4-108 (SSALIKDISK…ISKDFVSTSL (105 aa)) form the HIT domain. The C2H2-type zinc-finger motif lies at 381-403 (LRCNQCEFVTNMLLDLKAHLYQH). Positions 482-662 (KNINGPSVNM…PAPPSNSKPS (181 aa)) are disordered. Positions 490–500 (NMMNQNNPNNP) are enriched in low complexity. 2 stretches are compositionally biased toward polar residues: residues 501–513 (FRNT…QSQK) and 560–569 (GHQQFPNASS). The span at 570–582 (VGGGQTGLPGQGQ) shows a compositional bias: gly residues. Polar residues predominate over residues 588–599 (WNSNKIFNQQNR). Low complexity predominate over residues 600–626 (QNTVQAQPQAQNQQTNQQQIQNSNKNQ). Residues 653–662 (PAPPSNSKPS) show a composition bias toward pro residues.

It localises to the nucleus. Functionally, DNA-binding protein involved in single-strand DNA break repair, double-strand DNA break repair and base excision repair. Resolves abortive DNA ligation intermediates formed either at base excision sites, or when DNA ligases attempt to repair non-ligatable breaks induced by reactive oxygen species. Catalyzes the release of adenylate groups covalently linked to 5'-phosphate termini, resulting in the production of 5'-phosphate termini that can be efficiently rejoined. This Drosophila melanogaster (Fruit fly) protein is Aprataxin-like protein.